The sequence spans 360 residues: Ethanolamine-phosphate cytidylyltransferase (360 aa).

Residues 207–208, 215–218, K243, 291–294, and 321–325 contribute to the CTP site; these read GF, HTEA, HGDD, and HTEGL.

The protein belongs to the cytidylyltransferase family.

It carries out the reaction phosphoethanolamine + CTP + H(+) = CDP-ethanolamine + diphosphate. The protein operates within phospholipid metabolism; phosphatidylethanolamine biosynthesis; phosphatidylethanolamine from ethanolamine: step 2/3. In terms of biological role, ethanolamine-phosphate cytidylyltransferase that catalyzes the second step in the synthesis of phosphatidylethanolamine (PE) from ethanolamine via the CDP-ethanolamine pathway. This Dictyostelium discoideum (Social amoeba) protein is Ethanolamine-phosphate cytidylyltransferase (pctA).